The chain runs to 178 residues: Interleukin-10 (178 aa).

Positions 1 to 18 (MPRSALLCCLILLAGVAA) are cleaved as a signal peptide. 2 disulfides stabilise this stretch: C30/C126 and C80/C132. A glycan (N-linked (GlcNAc...) asparagine) is linked at N134.

The protein belongs to the IL-10 family. As to quaternary structure, homodimer. Interacts with IL10RA and IL10RB.

The protein localises to the secreted. Major immune regulatory cytokine that acts on many cells of the immune system where it has profound anti-inflammatory functions, limiting excessive tissue disruption caused by inflammation. Mechanistically, IL10 binds to its heterotetrameric receptor comprising IL10RA and IL10RB leading to JAK1 and STAT2-mediated phosphorylation of STAT3. In turn, STAT3 translocates to the nucleus where it drives expression of anti-inflammatory mediators. Targets antigen-presenting cells (APCs) such as macrophages and monocytes and inhibits their release of pro-inflammatory cytokines including granulocyte-macrophage colony-stimulating factor /GM-CSF, granulocyte colony-stimulating factor/G-CSF, IL-1 alpha, IL-1 beta, IL-6, IL-8 and TNF-alpha. Also interferes with antigen presentation by reducing the expression of MHC-class II and co-stimulatory molecules, thereby inhibiting their ability to induce T cell activation. In addition, controls the inflammatory response of macrophages by reprogramming essential metabolic pathways including mTOR signaling. In Lama glama (Llama), this protein is Interleukin-10 (IL10).